The sequence spans 110 residues: Flagellar hook-basal body complex protein FliE (110 aa).

This sequence belongs to the FliE family.

Its subcellular location is the bacterial flagellum basal body. The sequence is that of Flagellar hook-basal body complex protein FliE from Pseudomonas putida (strain W619).